A 705-amino-acid chain; its full sequence is Ribosomal RNA large subunit methyltransferase K/L (705 aa).

The THUMP domain occupies 43 to 154 (VVYRCCLWSR…GEKGILGFDL (112 aa)).

This sequence belongs to the methyltransferase superfamily. RlmKL family.

Its subcellular location is the cytoplasm. It catalyses the reaction guanosine(2445) in 23S rRNA + S-adenosyl-L-methionine = N(2)-methylguanosine(2445) in 23S rRNA + S-adenosyl-L-homocysteine + H(+). The catalysed reaction is guanosine(2069) in 23S rRNA + S-adenosyl-L-methionine = N(2)-methylguanosine(2069) in 23S rRNA + S-adenosyl-L-homocysteine + H(+). In terms of biological role, specifically methylates the guanine in position 2445 (m2G2445) and the guanine in position 2069 (m7G2069) of 23S rRNA. This chain is Ribosomal RNA large subunit methyltransferase K/L, found in Aliivibrio fischeri (strain MJ11) (Vibrio fischeri).